Consider the following 199-residue polypeptide: MSDSNNISSLYPPPPPYVKFFTKDNLERLAEYQSSHVTTDPEQITCELDFLIPPPVPSAGHYRAFGSVWQVKDELPDLETVGLRNLYDDRGQHGNNYQYKIKELHKLLKSLLLNMLELVSVLSVNPERFPDKVEHIRTILFNIHHLLNEYRPHQSRESLIMLLEEQLEHKKEEIANIHAICDKVQAKLAAMCKQYIADD.

The protein belongs to the Mediator complex subunit 7 family. As to quaternary structure, component of the Mediator complex.

The protein localises to the nucleus. Functionally, component of the Mediator complex, a coactivator involved in the regulated transcription of nearly all RNA polymerase II-dependent genes. Mediator functions as a bridge to convey information from gene-specific regulatory proteins to the basal RNA polymerase II transcription machinery. Mediator is recruited to promoters by direct interactions with regulatory proteins and serves as a scaffold for the assembly of a functional preinitiation complex with RNA polymerase II and the general transcription factors. The chain is Mediator of RNA polymerase II transcription subunit 7 (MED7) from Eremothecium gossypii (strain ATCC 10895 / CBS 109.51 / FGSC 9923 / NRRL Y-1056) (Yeast).